The following is a 126-amino-acid chain: Fluoride-specific ion channel FluC (126 aa).

2 consecutive transmembrane segments (helical) span residues Ile-2 to Leu-22 and Gly-36 to Leu-56. Na(+) is bound by residues Gly-75 and Ser-78. Helical transmembrane passes span Phe-80–Leu-100 and Val-105–Phe-125.

This sequence belongs to the fluoride channel Fluc/FEX (TC 1.A.43) family. In terms of assembly, homodimer.

Its subcellular location is the cell inner membrane. It catalyses the reaction fluoride(in) = fluoride(out). With respect to regulation, na(+) is not transported, but it plays an essential structural role and its presence is essential for fluoride channel function. In terms of biological role, fluoride-specific ion channel. Important for reducing fluoride concentration in the cell, thus reducing its toxicity. Is highly specific for fluoride ions and cannot transport chloride ions. The chain is Fluoride-specific ion channel FluC from Escherichia coli O1:K1 / APEC.